The sequence spans 430 residues: Lipoyl synthase, mitochondrial (430 aa).

The transit peptide at 1 to 37 (MAASTGKLRTLFSAHSSLSARPSSALPALRLTILRSY) directs the protein to the mitochondrion. A compositionally biased stretch (low complexity) spans 40–56 (TTPPDSSISNPSNPSTT). The disordered stretch occupies residues 40–64 (TTPPDSSISNPSNPSTTVKRPPTAF). [4Fe-4S] cluster-binding residues include Cys141, Cys146, Cys152, Cys172, Cys176, Cys179, and Ser387. Residues 155–376 (GSSKSAATAT…KERALEMGFL (222 aa)) enclose the Radical SAM core domain.

The protein belongs to the radical SAM superfamily. Lipoyl synthase family. [4Fe-4S] cluster is required as a cofactor.

The protein localises to the mitochondrion. It catalyses the reaction [[Fe-S] cluster scaffold protein carrying a second [4Fe-4S](2+) cluster] + N(6)-octanoyl-L-lysyl-[protein] + 2 oxidized [2Fe-2S]-[ferredoxin] + 2 S-adenosyl-L-methionine + 4 H(+) = [[Fe-S] cluster scaffold protein] + N(6)-[(R)-dihydrolipoyl]-L-lysyl-[protein] + 4 Fe(3+) + 2 hydrogen sulfide + 2 5'-deoxyadenosine + 2 L-methionine + 2 reduced [2Fe-2S]-[ferredoxin]. The protein operates within protein modification; protein lipoylation via endogenous pathway; protein N(6)-(lipoyl)lysine from octanoyl-[acyl-carrier-protein]: step 2/2. In terms of biological role, catalyzes the radical-mediated insertion of two sulfur atoms into the C-6 and C-8 positions of the octanoyl moiety bound to the lipoyl domains of lipoate-dependent enzymes, thereby converting the octanoylated domains into lipoylated derivatives. This is Lipoyl synthase, mitochondrial from Blastomyces gilchristii (strain SLH14081) (Blastomyces dermatitidis).